The sequence spans 257 residues: MLAKRIIPCLDVRDGQVVKGVQFRNHEIIGDIVPLAKRYAEEGADELVFYDITASSDGRVVDKSWVARVAEVIDIPFCVAGGIKSAQDAARILEFGADKVSINSPALANPQLITDLADRFGVQCIVVGIDSYFDKETGQYQVYQFTGDESRTRATQWQTCDWVQEVQKRGAGEIVLNMMNQDGVRNGYDLEQLNLVRSVCRVPLIASGGAGAMEHFAQAFTQANVDGALAASVFHKQIINIGELKQYLKQQGIEVRR.

Residues D11 and D130 contribute to the active site.

Belongs to the HisA/HisF family. As to quaternary structure, heterodimer of HisH and HisF.

It localises to the cytoplasm. The catalysed reaction is 5-[(5-phospho-1-deoxy-D-ribulos-1-ylimino)methylamino]-1-(5-phospho-beta-D-ribosyl)imidazole-4-carboxamide + L-glutamine = D-erythro-1-(imidazol-4-yl)glycerol 3-phosphate + 5-amino-1-(5-phospho-beta-D-ribosyl)imidazole-4-carboxamide + L-glutamate + H(+). It functions in the pathway amino-acid biosynthesis; L-histidine biosynthesis; L-histidine from 5-phospho-alpha-D-ribose 1-diphosphate: step 5/9. Its function is as follows. IGPS catalyzes the conversion of PRFAR and glutamine to IGP, AICAR and glutamate. The HisF subunit catalyzes the cyclization activity that produces IGP and AICAR from PRFAR using the ammonia provided by the HisH subunit. This is Imidazole glycerol phosphate synthase subunit HisF from Vibrio cholerae serotype O1 (strain ATCC 39541 / Classical Ogawa 395 / O395).